The chain runs to 492 residues: N-succinylglutamate 5-semialdehyde dehydrogenase (492 aa).

NAD(+) is bound at residue 220–225 (GSANTG). Active-site residues include Glu-243 and Cys-277.

This sequence belongs to the aldehyde dehydrogenase family. AstD subfamily.

It carries out the reaction N-succinyl-L-glutamate 5-semialdehyde + NAD(+) + H2O = N-succinyl-L-glutamate + NADH + 2 H(+). The protein operates within amino-acid degradation; L-arginine degradation via AST pathway; L-glutamate and succinate from L-arginine: step 4/5. Its function is as follows. Catalyzes the NAD-dependent reduction of succinylglutamate semialdehyde into succinylglutamate. This is N-succinylglutamate 5-semialdehyde dehydrogenase from Escherichia coli O157:H7.